The chain runs to 263 residues: Methylesterase 1 (263 aa).

S85 acts as the Acyl-ester intermediate in catalysis. Residues D213 and H241 each act as charge relay system in the active site.

It belongs to the AB hydrolase superfamily. Methylesterase family.

It catalyses the reaction methyl (indol-3-yl)acetate + H2O = (indol-3-yl)acetate + methanol + H(+). It carries out the reaction methyl (-)-jasmonate + H2O = jasmonate + methanol + H(+). The enzyme catalyses methyl salicylate + H2O = salicylate + methanol + H(+). Its pathway is plant hormone biosynthesis. It functions in the pathway lipid metabolism; oxylipin biosynthesis. With respect to regulation, esterase activity is down-regulated by salicylic acid (SA). Methylesterase shown to have carboxylesterase activity, methyl indole-3-acetic acid (MeIAA) esterase activity, methyl salicylate (MeSA) esterase activity and methyl jasmonate (MeJA) esterase activity in vitro. Required to convert methyl salicylate (MeSA) to salicylic acid (SA) as part of the signal transduction pathways that activate systemic acquired resistance in systemic tissue. MeSA is believed to be an inactive form that needs to be demethylated to exert a biological effect. This is Methylesterase 1 from Arabidopsis thaliana (Mouse-ear cress).